The following is a 232-amino-acid chain: BTB/POZ domain-containing protein KCTD11 (232 aa).

A BTB domain is found at 1 to 49; sequence MLGAMFRAGTPMTPNLNPEGGGHYFIDRDGKAFRHILNFLRLGRLDLPL.

As to quaternary structure, homopentamer. Interacts with KCTD6 and KCTD21; KCTD11 and KCTD6 or KCTD21 may associate in pentameric assemblies. Component of the BCR(KCTD11) E3 ubiquitin ligase complex, at least composed of CUL3 and KCTD11 and RBX1. Interacts (via BTB domain) with CUL3; initially a 4:4 stoichiometry has been reported, however, electron microscopy revealed pentameric states of the BTB domain.

It participates in protein modification; protein ubiquitination. Functionally, plays a role as a marker and a regulator of neuronal differentiation; Up-regulated by a variety of neurogenic signals, such as retinoic acid, epidermal growth factor/EGF and NGFB/nerve growth factor. Induces apoptosis, growth arrest and the expression of cyclin-dependent kinase inhibitor CDKN1B. Plays a role as a tumor repressor and inhibits cell growth and tumorigenicity of medulloblastoma (MDB). Acts as a probable substrate-specific adapter for a BCR (BTB-CUL3-RBX1) E3 ubiquitin-protein ligase complex towards HDAC1. Functions as antagonist of the Hedgehog pathway on cell proliferation and differentiation by affecting the nuclear transfer of transcription factor GLI1, thus maintaining cerebellar granule cells in undifferentiated state, this effect probably occurs via HDAC1 down-regulation, keeping GLI1 acetylated and inactive. This chain is BTB/POZ domain-containing protein KCTD11 (KCTD11), found in Bos taurus (Bovine).